Here is an 86-residue protein sequence, read N- to C-terminus: Toxin Tpa5 (86 aa).

Residues 1-20 (MSIFPIALALLLIGLEEGEA) form the signal peptide. In terms of domain architecture, LCN-type CS-alpha/beta spans 22–85 (RDGYPISKNN…WGDPGTPPCM (64 aa)). 4 cysteine pairs are disulfide-bonded: Cys-33/Cys-84, Cys-37/Cys-58, Cys-43/Cys-64, and Cys-47/Cys-66.

This sequence belongs to the long (4 C-C) scorpion toxin superfamily. Sodium channel inhibitor family. Beta subfamily. As to expression, expressed by the venom gland.

Its subcellular location is the secreted. Beta toxins bind voltage-independently at site-4 of sodium channels (Nav) and shift the voltage of activation toward more negative potentials thereby affecting sodium channel activation and promoting spontaneous and repetitive firing. The chain is Toxin Tpa5 from Tityus pachyurus (Colombian scorpion).